A 1285-amino-acid polypeptide reads, in one-letter code: Ataxin-2 (1285 aa).

3 disordered regions span residues 1–85 (MRSS…PGSR), 111–178 (ARAC…SPGA), and 197–224 (PVAS…GLPQ). Positions 29 to 38 (SLPRTARRGG) are enriched in basic residues. A compositionally biased stretch (pro residues) spans 48-65 (AGPPPRGPGAPPRGPRSP). Residues 128 to 144 (SSSARPAPGCPRPACEP) show a composition bias toward low complexity. Residues 205-214 (AGGGRPGLGR) are compositionally biased toward gly residues. Residues Ser-218 and Ser-219 each carry the phosphoserine modification. The region spanning 237–314 (RMVHILTSVV…FVVVQFKDTD (78 aa)) is the Sm domain. Ser-362 and Ser-435 each carry phosphoserine. Composition is skewed to basic and acidic residues over residues 428–440 (ALEN…EEKY) and 447–461 (CSDR…RDNK). 2 disordered regions span residues 428–925 (ALEN…HQQP) and 1111–1191 (AALH…QSSF). Ser-477 is modified (phosphoserine). Residues 498 to 510 (ASHTSDFNPNAGS) show a composition bias toward polar residues. At Ser-523 the chain carries Phosphoserine. The segment covering 526–552 (PSHSSRPPSRYQSGPNSLPPRAATHTR) has biased composition (low complexity). The span at 554–567 (PSRPPSRPSRPPSH) shows a compositional bias: pro residues. Ser-593 is subject to Phosphoserine. Residues 596–606 (AQRHPRNHRVS) are compositionally biased toward basic residues. Arg-609 is subject to Asymmetric dimethylarginine; alternate. Omega-N-methylarginine; alternate is present on Arg-609. A phosphoserine mark is found at Ser-611 and Ser-653. The segment covering 662–672 (PRQSSIGNSPS) has biased composition (polar residues). A compositionally biased stretch (low complexity) spans 685-694 (PAEAVSMPVP). Ser-697 carries the post-translational modification Phosphoserine. Thr-710 is subject to Phosphothreonine. Polar residues predominate over residues 737–746 (ASETSPSFSK). A phosphoserine mark is found at Ser-741 and Ser-753. Basic and acidic residues predominate over residues 757 to 773 (SEHRKQIDDLKKFKNDF). Residues 776 to 789 (QPSSTSESMDQLLS) are compositionally biased toward polar residues. Over residues 790–813 (KNREGEKSRDLIKDKTEASAKDSF) the composition is skewed to basic and acidic residues. Positions 814 to 838 (IDSSSSSSNCTSGSSKTNSPSISPS) are enriched in low complexity. Phosphoserine occurs at positions 827, 828, 832, 836, 838, 859, and 860. Polar residues predominate over residues 851–862 (VTSQGVQTSSPA). Residue Lys-864 forms a Glycyl lysine isopeptide (Lys-Gly) (interchain with G-Cter in SUMO2) linkage. The span at 864 to 881 (KQEKDDREEKKDTTEQVR) shows a compositional bias: basic and acidic residues. 2 stretches are compositionally biased toward low complexity: residues 896 to 907 (SFSQPKPSTTPT) and 1128 to 1165 (GQQQ…QQSA).

It belongs to the ataxin-2 family. Interacts with RBFOX1. Monomer. Can also form homodimers. Interacts with polyribosomes. Interacts with EGFR. Interacts with SH3GL3. Interacts with SH3GL2, SH3KBP1 and CBL. Interacts with ATXN2L. Expressed in the heart, lung, liver, kidney, skeletal muscle, spleen and intestine. Predominant expression was seen in the brain where a high level expression was found in the pyramidal cortical neurons, large brain stem neurons and cerebellar Purkinje cells. All three isoforms were found in all the tissues except skeletal muscle where only isoform 1 was found.

It is found in the cytoplasm. Its function is as follows. Involved in EGFR trafficking, acting as negative regulator of endocytic EGFR internalization at the plasma membrane. This Mus musculus (Mouse) protein is Ataxin-2 (Atxn2).